Reading from the N-terminus, the 288-residue chain is Bis(5'-nucleosyl)-tetraphosphatase, symmetrical (288 aa).

Belongs to the Ap4A hydrolase family.

The enzyme catalyses P(1),P(4)-bis(5'-adenosyl) tetraphosphate + H2O = 2 ADP + 2 H(+). In terms of biological role, hydrolyzes diadenosine 5',5'''-P1,P4-tetraphosphate to yield ADP. The polypeptide is Bis(5'-nucleosyl)-tetraphosphatase, symmetrical (Pseudomonas putida (strain ATCC 700007 / DSM 6899 / JCM 31910 / BCRC 17059 / LMG 24140 / F1)).